The primary structure comprises 343 residues: Cysteine proteinase 1 (343 aa).

An N-terminal signal peptide occupies residues methionine 1–serine 18. The propeptide at arginine 19–serine 117 is activation peptide. Intrachain disulfides connect cysteine 139/cysteine 190, cysteine 173/cysteine 224, and cysteine 279/cysteine 332. Cysteine 142 is a catalytic residue. Active-site residues include histidine 286 and asparagine 311.

The protein belongs to the peptidase C1 family. In terms of processing, phosphoglycosylated, contains GlcNAc-alpha-1-P-Ser residues.

It is found in the lysosome. Its function is as follows. Cysteine proteinases 1 and 2 are believed to participate in the breakdown of protein during differentiation of Dictyostelium as a response to starvation. The chain is Cysteine proteinase 1 (cprA) from Dictyostelium discoideum (Social amoeba).